The sequence spans 440 residues: GTPase Der (440 aa).

EngA-type G domains are found at residues 3 to 168 (PIIA…GKMD) and 177 to 353 (LKLA…EEYT). GTP contacts are provided by residues 9 to 16 (GRPNVGKS), 56 to 60 (DTGGL), 119 to 122 (NKID), 183 to 190 (GKPNAGKS), 230 to 234 (DTAGI), and 295 to 298 (NKWD). Residues 354 to 438 (KRISTGLLNT…PIMISFENKS (85 aa)) enclose the KH-like domain.

It belongs to the TRAFAC class TrmE-Era-EngA-EngB-Septin-like GTPase superfamily. EngA (Der) GTPase family. As to quaternary structure, associates with the 50S ribosomal subunit.

Its function is as follows. GTPase that plays an essential role in the late steps of ribosome biogenesis. This chain is GTPase Der, found in Fusobacterium nucleatum subsp. nucleatum (strain ATCC 25586 / DSM 15643 / BCRC 10681 / CIP 101130 / JCM 8532 / KCTC 2640 / LMG 13131 / VPI 4355).